The chain runs to 149 residues: Chromophore lyase CpcS/CpeS homolog (149 aa).

It belongs to the CpcS/CpeS biliprotein lyase family.

It localises to the plastid. The protein localises to the chloroplast. In terms of biological role, might function to covalently attach a chromophore to Cys residue(s) of phycobiliproteins. The polypeptide is Chromophore lyase CpcS/CpeS homolog (Pyropia yezoensis (Susabi-nori)).